Reading from the N-terminus, the 459-residue chain is Ribulose bisphosphate carboxylase large chain (459 aa).

Lysine 4 is modified (N6,N6,N6-trimethyllysine). The substrate site is built by asparagine 113 and threonine 163. Lysine 165 (proton acceptor) is an active-site residue. Lysine 167 contacts substrate. Mg(2+)-binding residues include lysine 191, aspartate 193, and glutamate 194. N6-carboxylysine is present on lysine 191. Histidine 284 serves as the catalytic Proton acceptor. 3 residues coordinate substrate: arginine 285, histidine 317, and serine 369.

The protein belongs to the RuBisCO large chain family. Type I subfamily. In terms of assembly, heterohexadecamer of 8 large chains and 8 small chains; disulfide-linked. The disulfide link is formed within the large subunit homodimers. Mg(2+) serves as cofactor. The disulfide bond which can form in the large chain dimeric partners within the hexadecamer appears to be associated with oxidative stress and protein turnover.

It localises to the plastid. Its subcellular location is the chloroplast. It catalyses the reaction 2 (2R)-3-phosphoglycerate + 2 H(+) = D-ribulose 1,5-bisphosphate + CO2 + H2O. The enzyme catalyses D-ribulose 1,5-bisphosphate + O2 = 2-phosphoglycolate + (2R)-3-phosphoglycerate + 2 H(+). Its function is as follows. RuBisCO catalyzes two reactions: the carboxylation of D-ribulose 1,5-bisphosphate, the primary event in carbon dioxide fixation, as well as the oxidative fragmentation of the pentose substrate in the photorespiration process. Both reactions occur simultaneously and in competition at the same active site. The chain is Ribulose bisphosphate carboxylase large chain from Apium graveolens (Celery).